Reading from the N-terminus, the 561-residue chain is Arf-GAP domain and FG repeat-containing protein 1 (561 aa).

Residues 11–135 form the Arf-GAP domain; sequence EKHLKMLRDM…WYVPPEQAKV (125 aa). Residues 29–52 form a C4-type zinc finger; the sequence is CFDCDQRGPTYVNMTVGSFVCTSC. Ser-167 is subject to Phosphoserine. A disordered region spans residues 170-193; the sequence is ALHLNKGTPSQSPVVGRSQGQQQE. A compositionally biased stretch (polar residues) spans 176–191; that stretch reads GTPSQSPVVGRSQGQQ. Thr-177 carries the phosphothreonine modification. Residues Ser-181 and Ser-362 each carry the phosphoserine modification. The O-linked (GlcNAc) serine glycan is linked to Ser-367. Residues 413–433 form a disordered region; the sequence is SAQTQPASSGPAPFGATPSTN.

Interacts with FCHO1. Interacts with EPS15R and EPS15. Post-translationally, O-glycosylated. Expressed in the testes (at protein level).

The protein resides in the nucleus. The protein localises to the cytoplasmic vesicle. Required for vesicle docking or fusion during acrosome biogenesis. May play a role in RNA trafficking or localization. The chain is Arf-GAP domain and FG repeat-containing protein 1 (Agfg1) from Mus musculus (Mouse).